The chain runs to 210 residues: Large ribosomal subunit protein bL9 (210 aa).

The segment at 172 to 210 (EAAAAALEPDSEEEFEAATPPSELAAEASDEDADDAKEA) is disordered. The segment covering 199 to 210 (ASDEDADDAKEA) has biased composition (acidic residues).

This sequence belongs to the bacterial ribosomal protein bL9 family.

Its function is as follows. Binds to the 23S rRNA. The chain is Large ribosomal subunit protein bL9 from Sphingopyxis alaskensis (strain DSM 13593 / LMG 18877 / RB2256) (Sphingomonas alaskensis).